A 207-amino-acid polypeptide reads, in one-letter code: Interleukin-6 (207 aa).

The signal sequence occupies residues Met1 to Ala20. Cys67 and Cys73 form a disulfide bridge. Ser76 carries the phosphoserine modification. The cysteines at positions 96 and 106 are disulfide-linked.

The protein belongs to the IL-6 superfamily. Component of a hexamer of two molecules each of IL6, IL6R and IL6ST; first binds to IL6R to associate with the signaling subunit IL6ST. Interacts with IL6R (via the N-terminal ectodomain); this interaction may be affected by IL6R-binding with SORL1, hence decreasing IL6 cis signaling. Interacts with SORL1 (via the N-terminal ectodomain); this interaction leads to IL6 internalization and lysosomal degradation. May form a trimeric complex with the soluble SORL1 ectodomain and soluble IL6R receptor; this interaction might stabilize circulating IL6, hence promoting IL6 trans signaling.

It localises to the secreted. Its function is as follows. Cytokine with a wide variety of biological functions in immunity, tissue regeneration, and metabolism. Binds to IL6R, then the complex associates to the signaling subunit IL6ST/gp130 to trigger the intracellular IL6-signaling pathway. The interaction with the membrane-bound IL6R and IL6ST stimulates 'classic signaling', whereas the binding of IL6 and soluble IL6R to IL6ST stimulates 'trans-signaling'. Alternatively, 'cluster signaling' occurs when membrane-bound IL6:IL6R complexes on transmitter cells activate IL6ST receptors on neighboring receiver cells. In terms of biological role, IL6 is a potent inducer of the acute phase response. Rapid production of IL6 contributes to host defense during infection and tissue injury, but excessive IL6 synthesis is involved in disease pathology. In the innate immune response, is synthesized by myeloid cells, such as macrophages and dendritic cells, upon recognition of pathogens through toll-like receptors (TLRs) at the site of infection or tissue injury. In the adaptive immune response, is required for the differentiation of B cells into immunoglobulin-secreting cells. Plays a major role in the differentiation of CD4(+) T cell subsets. Essential factor for the development of T follicular helper (Tfh) cells that are required for the induction of germinal-center formation. Required to drive naive CD4(+) T cells to the Th17 lineage. Also required for proliferation of myeloma cells and the survival of plasmablast cells. Functionally, acts as an essential factor in bone homeostasis and on vessels directly or indirectly by induction of VEGF, resulting in increased angiogenesis activity and vascular permeability. Induces, through 'trans-signaling' and synergistically with IL1B and TNF, the production of VEGF. Involved in metabolic controls, is discharged into the bloodstream after muscle contraction increasing lipolysis and improving insulin resistance. 'Trans-signaling' in central nervous system also regulates energy and glucose homeostasis. Mediates, through GLP-1, crosstalk between insulin-sensitive tissues, intestinal L cells and pancreatic islets to adapt to changes in insulin demand. Also acts as a myokine. Plays a protective role during liver injury, being required for maintenance of tissue regeneration. Also has a pivotal role in iron metabolism by regulating HAMP/hepcidin expression upon inflammation or bacterial infection. Through activation of IL6ST-YAP-NOTCH pathway, induces inflammation-induced epithelial regeneration. This chain is Interleukin-6 (IL6), found in Vulpes vulpes (Red fox).